Here is a 100-residue protein sequence, read N- to C-terminus: Urease subunit gamma (100 aa).

The protein belongs to the urease gamma subunit family. As to quaternary structure, heterotrimer of UreA (gamma), UreB (beta) and UreC (alpha) subunits. Three heterotrimers associate to form the active enzyme.

Its subcellular location is the cytoplasm. It catalyses the reaction urea + 2 H2O + H(+) = hydrogencarbonate + 2 NH4(+). The protein operates within nitrogen metabolism; urea degradation; CO(2) and NH(3) from urea (urease route): step 1/1. In Mycobacterium ulcerans (strain Agy99), this protein is Urease subunit gamma.